We begin with the raw amino-acid sequence, 267 residues long: DNA repair protein RecO (267 aa).

The protein belongs to the RecO family.

Its function is as follows. Involved in DNA repair and RecF pathway recombination. The sequence is that of DNA repair protein RecO from Prochlorococcus marinus (strain MIT 9303).